Here is a 75-residue protein sequence, read N- to C-terminus: Large ribosomal subunit protein eL14 (75 aa).

It belongs to the eukaryotic ribosomal protein eL14 family.

The sequence is that of Large ribosomal subunit protein eL14 from Methanothermobacter thermautotrophicus (strain ATCC 29096 / DSM 1053 / JCM 10044 / NBRC 100330 / Delta H) (Methanobacterium thermoautotrophicum).